Reading from the N-terminus, the 154-residue chain is Deoxyuridine 5'-triphosphate nucleotidohydrolase (154 aa).

Residues 64–66, asparagine 77, 81–83, and lysine 91 each bind substrate; these read RSG and TID.

This sequence belongs to the dUTPase family. Homotrimer. It depends on Mg(2+) as a cofactor.

The catalysed reaction is dUTP + H2O = dUMP + diphosphate + H(+). The protein operates within pyrimidine metabolism; dUMP biosynthesis; dUMP from dCTP (dUTP route): step 2/2. Functionally, this enzyme is involved in nucleotide metabolism: it produces dUMP, the immediate precursor of thymidine nucleotides and it decreases the intracellular concentration of dUTP so that uracil cannot be incorporated into DNA. This is Deoxyuridine 5'-triphosphate nucleotidohydrolase from Mycobacterium avium (strain 104).